Reading from the N-terminus, the 304-residue chain is tRNA dimethylallyltransferase (304 aa).

Gly-2–Thr-9 lines the ATP pocket. Position 4-9 (Thr-4–Thr-9) interacts with substrate. The tract at residues Asp-28–Leu-31 is interaction with substrate tRNA.

It belongs to the IPP transferase family. As to quaternary structure, monomer. Mg(2+) is required as a cofactor.

It carries out the reaction adenosine(37) in tRNA + dimethylallyl diphosphate = N(6)-dimethylallyladenosine(37) in tRNA + diphosphate. Functionally, catalyzes the transfer of a dimethylallyl group onto the adenine at position 37 in tRNAs that read codons beginning with uridine, leading to the formation of N6-(dimethylallyl)adenosine (i(6)A). The polypeptide is tRNA dimethylallyltransferase (Blochmanniella pennsylvanica (strain BPEN)).